The primary structure comprises 551 residues: Cleavage and polyadenylation specificity factor subunit 6 (551 aa).

The region spanning 81 to 161 (IALYIGNLTW…QNPVVTPCNK (81 aa)) is the RRM domain. Residue Thr157 is modified to Phosphothreonine. The segment covering 169–180 (MQSRKTTQSGQM) has biased composition (polar residues). Disordered stretches follow at residues 169–410 (MQSR…TPLS) and 477–551 (LHGI…YRHR). Pro residues-rich tracts occupy residues 237–265 (TRPP…PLAG), 285–366 (GQPP…PPPA), and 377–388 (GPPPTDPYGRPP). 2 stretches are compositionally biased toward basic and acidic residues: residues 389–404 (PYDR…EMDA) and 489–503 (SRRE…SRSR). Phosphoserine is present on residues Ser494, Ser500, Ser511, Ser513, and Ser525. Basic residues predominate over residues 504–514 (EKSRRHKSRSR). The segment covering 515 to 551 (DRHDDYYRERSRERERHRDRDRDRDRERDREREYRHR) has biased composition (basic and acidic residues).

Belongs to the RRM CPSF6/7 family. As to quaternary structure, component of the cleavage factor Im (CFIm) complex.

The protein resides in the nucleus. Its subcellular location is the nucleoplasm. It localises to the nucleus speckle. It is found in the cytoplasm. Component of the cleavage factor Im (CFIm) complex that functions as an activator of the pre-mRNA 3'-end cleavage and polyadenylation processing required for the maturation of pre-mRNA into functional mRNAs. CFIm contributes to the recruitment of multiprotein complexes on specific sequences on the pre-mRNA 3'-end, so called cleavage and polyadenylation signals (pA signals). Most pre-mRNAs contain multiple pA signals, resulting in alternative cleavage and polyadenylation (APA) producing mRNAs with variable 3'-end formation. The CFIm complex acts as a key regulator of cleavage and polyadenylation site choice during APA through its binding to 5'-UGUA-3' elements localized in the 3'-untranslated region (UTR) for a huge number of pre-mRNAs. Plays a role in mRNA export. This chain is Cleavage and polyadenylation specificity factor subunit 6, found in Gallus gallus (Chicken).